A 187-amino-acid polypeptide reads, in one-letter code: Translation machinery-associated protein 22 (187 aa).

Positions 94–165 constitute an SUI1 domain; that stretch reads VTIKRIERNK…EIEEFILEKY (72 aa).

This sequence belongs to the DENR family. Interacts with the 40S ribosomal subunit.

The protein resides in the cytoplasm. This Neurospora crassa (strain ATCC 24698 / 74-OR23-1A / CBS 708.71 / DSM 1257 / FGSC 987) protein is Translation machinery-associated protein 22 (tma-22).